The primary structure comprises 503 residues: Probable cytosol aminopeptidase (503 aa).

Positions 270 and 275 each coordinate Mn(2+). Lysine 282 is an active-site residue. 3 residues coordinate Mn(2+): aspartate 293, aspartate 352, and glutamate 354. Residue arginine 356 is part of the active site.

This sequence belongs to the peptidase M17 family. Requires Mn(2+) as cofactor.

The protein localises to the cytoplasm. The enzyme catalyses Release of an N-terminal amino acid, Xaa-|-Yaa-, in which Xaa is preferably Leu, but may be other amino acids including Pro although not Arg or Lys, and Yaa may be Pro. Amino acid amides and methyl esters are also readily hydrolyzed, but rates on arylamides are exceedingly low.. It catalyses the reaction Release of an N-terminal amino acid, preferentially leucine, but not glutamic or aspartic acids.. In terms of biological role, presumably involved in the processing and regular turnover of intracellular proteins. Catalyzes the removal of unsubstituted N-terminal amino acids from various peptides. This chain is Probable cytosol aminopeptidase, found in Salmonella agona (strain SL483).